We begin with the raw amino-acid sequence, 92 residues long: Small nuclear ribonucleoprotein E (92 aa).

Residues 18-92 (INLIFRYLQN…NITLLQSVSN (75 aa)) enclose the Sm domain.

This sequence belongs to the snRNP Sm proteins family. In terms of assembly, core component of the spliceosomal U1, U2, U4 and U5 small nuclear ribonucleoproteins (snRNPs), the building blocks of the spliceosome. Most spliceosomal snRNPs contain a common set of Sm proteins, snrpb, snrpd1, snrpd2, snrpd3, snrpe, snrpf and snrpg that assemble in a heptameric protein ring on the Sm site of the small nuclear RNA to form the core snRNP. Component of the U1 snRNP. The U1 snRNP is composed of the U1 snRNA and the 7 core Sm proteins snrpb, snrpd1, snrpd2, snrpd3, snrpe, snrpf and snrpg, and at least three U1 snRNP-specific proteins snrnp70/u1-70k, snrpa/u1-a and snrpc/u1-c. Component of the U4/U6-U5 tri-snRNP complex composed of the U4, U6 and U5 snRNAs and at least prpf3, prpf4, prpf6, prpf8, prpf31, snrnp200, txnl4a, snrnp40, snrpb, snrpd1, snrpd2, snrpd3, snrpe, snrpf, snrpg, ddx23, cd2bp2, ppih, snu13, eftud2, sart1 and usp39, plus lsm2, lsm3, lsm4, lsm5, lsm6, lsm7 and lsm8. Component of the U7 snRNP complex, or U7 Sm protein core complex, that is composed of the U7 snRNA and at least lsm10, lsm11, snrpb, snrpd3, snrpe, snrpf and snrpg; the complex does not contain snrpd1 and snrpd2. Component of the minor spliceosome, which splices U12-type introns. Part of the SMN-Sm complex that contains smn1, gemin2/sip1, ddx20/gemin3, gemin4, gemin5, gemin6, gemin7, gemin8, strap/unrip and the Sm proteins snrpb, snrpd1, snrpd2, snrpd3, snrpe, snrpf and snrpg; catalyzes core snRNPs assembly. Forms a 6S pICln-Sm complex composed of clns1a/pICln, snrpd1, snrpd2, snrpe, snrpf and snrpg; ring-like structure where clns1a/pICln mimics additional Sm proteins and which is unable to assemble into the core snRNP.

The protein resides in the cytoplasm. The protein localises to the cytosol. It is found in the nucleus. Plays a role in pre-mRNA splicing as a core component of the spliceosomal U1, U2, U4 and U5 small nuclear ribonucleoproteins (snRNPs), the building blocks of the spliceosome. Component of both the pre-catalytic spliceosome B complex and activated spliceosome C complexes. As a component of the minor spliceosome, involved in the splicing of U12-type introns in pre-mRNAs. As part of the U7 snRNP it is involved in histone 3'-end processing. The chain is Small nuclear ribonucleoprotein E (snrpe) from Danio rerio (Zebrafish).